Here is a 704-residue protein sequence, read N- to C-terminus: SH3KBP1-binding protein 1 (704 aa).

Ala2 is subject to N-acetylalanine. Residues 19–88 (EVIHLNVGGK…LRTKELDPRG (70 aa)) form the BTB domain. Residues 146-165 (VGPQQIGGRPAPVRRSNTMP) form a disordered region. Thr163 carries the phosphothreonine modification. 5 WD repeats span residues 233–280 (RLDW…GGSE), 283–322 (VFHL…WQVQ), 324–359 (VQPI…LRMK), 428–466 (VHRS…GMIS), and 548–586 (LECE…DGLG). Positions 609–704 (PLTSSRASFP…PKNTLNETSF (96 aa)) are disordered. Over residues 611–631 (TSSRASFPSPSPRTSLTSLHS) the composition is skewed to low complexity. The PXXXPR signature appears at 618–623 (PSPSPR). Phosphoserine is present on residues Ser644 and Ser646. Positions 678 to 683 (PTPAPR) match the PXXXPR motif.

It belongs to the KCTD3 family. As to quaternary structure, monomer. Interacts with CUL3; interaction is direct and forms a 5:5 heterodecamer. Interacts (via PXXXPR motifs) with SH3KBP1 (via SH3 domains). Directly interacts with cathepsin B/CTSB.

It is found in the lysosome. In terms of biological role, inhibits CBL-SH3KBP1 complex mediated down-regulation of EGFR signaling by sequestration of SH3KBP1. Binds to SH3KBP1 and prevents its interaction with CBL and inhibits translocation of SH3KBP1 to EGFR containing vesicles upon EGF stimulation. In Rattus norvegicus (Rat), this protein is SH3KBP1-binding protein 1 (Shkbp1).